Reading from the N-terminus, the 114-residue chain is T cell receptor beta variable 19 (114 aa).

An N-terminal signal peptide occupies residues 1–21; it reads MSNQVLCCVVLCLLGANTVDG. The region spanning 22 to 114 is the Ig-like domain; sequence GITQSPKYLF…TAFYLCASSI (93 aa). N-linked (GlcNAc...) asparagine glycosylation is present at asparagine 37. A disulfide bridge links cysteine 42 with cysteine 110.

In terms of assembly, alpha-beta TR is a heterodimer composed of an alpha and beta chain; disulfide-linked. The alpha-beta TR is associated with the transmembrane signaling CD3 coreceptor proteins to form the TR-CD3 (TcR or TCR). The assembly of alpha-beta TR heterodimers with CD3 occurs in the endoplasmic reticulum where a single alpha-beta TR heterodimer associates with one CD3D-CD3E heterodimer, one CD3G-CD3E heterodimer and one CD247 homodimer forming a stable octameric structure. CD3D-CD3E and CD3G-CD3E heterodimers preferentially associate with TR alpha and TR beta chains, respectively. The association of the CD247 homodimer is the last step of TcR assembly in the endoplasmic reticulum and is required for transport to the cell surface. (Microbial infection) Interacts with Staphylococcus aureus enterotoxin type B/SEB.

It localises to the cell membrane. V region of the variable domain of T cell receptor (TR) beta chain that participates in the antigen recognition. Alpha-beta T cell receptors are antigen specific receptors which are essential to the immune response and are present on the cell surface of T lymphocytes. Recognize peptide-major histocompatibility (MH) (pMH) complexes that are displayed by antigen presenting cells (APC), a prerequisite for efficient T cell adaptive immunity against pathogens. Binding of alpha-beta TR to pMH complex initiates TR-CD3 clustering on the cell surface and intracellular activation of LCK that phosphorylates the ITAM motifs of CD3G, CD3D, CD3E and CD247 enabling the recruitment of ZAP70. In turn ZAP70 phosphorylates LAT, which recruits numerous signaling molecules to form the LAT signalosome. The LAT signalosome propagates signal branching to three major signaling pathways, the calcium, the mitogen-activated protein kinase (MAPK) kinase and the nuclear factor NF-kappa-B (NF-kB) pathways, leading to the mobilization of transcription factors that are critical for gene expression and essential for T cell growth and differentiation. The T cell repertoire is generated in the thymus, by V-(D)-J rearrangement. This repertoire is then shaped by intrathymic selection events to generate a peripheral T cell pool of self-MH restricted, non-autoaggressive T cells. Post-thymic interaction of alpha-beta TR with the pMH complexes shapes TR structural and functional avidity. This Homo sapiens (Human) protein is T cell receptor beta variable 19.